Consider the following 609-residue polypeptide: MRQLWTQAAVIALTAGTLGAPAHASGQSGQRFTPNFPITQPAAPPPGETIQAQPGEAESLPRPTPIPVQSAPPIAQAELPPPAPVSTPAPAPQPVLRATPPRTVVTTTVTGPVVEVAGKPQVRVVESGDALDAIARGMGSTRAELVKLNDLEPPYRLKLGQKIKGPATTAKAYVVQTGDTMFAIAKRFNVTAAALAEENDLKSGAAIKKGQKLLLPDGYKDKGPIKTTQVIPGTPATMVAEAEPAPATTRPATPAATPSRPVRQPVSEETSEPATTSTTTLSVTGSVVTVAGPRQVHTVKSGDTLTAIARKFDMSVSELAEANKLDTEKPLKLGAKIKGPATTQKAYSVQTGDTLGEIAKRFNVSVKALAAENNLRATASLKKGQKIALPDGFRDKGPIRTTTTTRPATPPANTYARVDSSAAAASTPSSPVPYTPSGAAPRPSAPVAAQPITPPPSSGRTIIETAAAPTEAEIIASGKGKFAWPLRGDIISSFGVKGTGQRNDGLNIRAPQGTPVLSSADGEIAYAGNQVPTFGNLVLVKHADGWVTAYAHLSSTNVKMRQQVKQGEQLGTVGATGGVNEPQLHFEMRYAPTVKDKAKPVDPALVLPR.

A signal peptide spans 1–24; the sequence is MRQLWTQAAVIALTAGTLGAPAHA. Residues 21–103 form a disordered region; it reads PAHASGQSGQ…PVLRATPPRT (83 aa). Polar residues predominate over residues 25–38; the sequence is SGQSGQRFTPNFPI. The span at 79–93 shows a compositional bias: pro residues; that stretch reads LPPPAPVSTPAPAPQ. LysM domains are found at residues 121–165 and 171–215; these read QVRV…KIKG and KAYV…KLLL. Composition is skewed to low complexity over residues 242 to 258 and 265 to 280; these read AEPAPATTRPATPAATP and PVSEETSEPATTSTTT. The segment at 242–280 is disordered; that stretch reads AEPAPATTRPATPAATPSRPVRQPVSEETSEPATTSTTT. 2 consecutive LysM domains span residues 295–339 and 345–389; these read QVHT…KIKG and KAYS…KIAL. Positions 389–457 are disordered; it reads LPDGFRDKGP…AAQPITPPPS (69 aa). Over residues 400–429 the composition is skewed to low complexity; that stretch reads RTTTTTRPATPPANTYARVDSSAAAASTPS. Residues 503-603 are lytM; sequence NDGLNIRAPQ…VKDKAKPVDP (101 aa).

Its subcellular location is the periplasm. Its function is as follows. Required for efficient cell division, cell polarity and normal cell morphology. Facilitates remodeling of the peptidoglycan layer and, thus, coordinated constriction of the cell envelope during the division process. Plays a critical role in maintaining proper cell envelope architecture during growth and division. Required for normal envelope invagination during cell division and to establish or maintain outer membrane connections throughout the cell envelope. May serve as a regulatory hub coordinating the activities of multiple peptidoglycan-degrading enzymes during cell constriction. Required to position SdpA and SdpB at midcell. This Caulobacter vibrioides (strain NA1000 / CB15N) (Caulobacter crescentus) protein is Cell division protein DipM.